The chain runs to 100 residues: C-X-C motif chemokine 3 (100 aa).

A signal peptide spans 1-31; it reads MAPPTCRLLSAALVLLLLLATNHQATGAVVA. Disulfide bonds link C36–C62 and C38–C78.

Belongs to the intercrine alpha (chemokine CxC) family.

Its subcellular location is the secreted. Functionally, ligand for CXCR2. Has chemotactic activity for neutrophils. May play a role in inflammation and exert its effects on endothelial cells in an autocrine fashion. In Mus musculus (Mouse), this protein is C-X-C motif chemokine 3.